The following is a 1391-amino-acid chain: DNA-directed RNA polymerase subunit beta (1391 aa).

This sequence belongs to the RNA polymerase beta chain family. In terms of assembly, the RNAP catalytic core consists of 2 alpha, 1 beta, 1 beta' and 1 omega subunit. When a sigma factor is associated with the core the holoenzyme is formed, which can initiate transcription.

It carries out the reaction RNA(n) + a ribonucleoside 5'-triphosphate = RNA(n+1) + diphosphate. DNA-dependent RNA polymerase catalyzes the transcription of DNA into RNA using the four ribonucleoside triphosphates as substrates. In Mycoplasma pneumoniae (strain ATCC 29342 / M129 / Subtype 1) (Mycoplasmoides pneumoniae), this protein is DNA-directed RNA polymerase subunit beta.